Here is a 141-residue protein sequence, read N- to C-terminus: ATP synthase epsilon chain (141 aa).

The protein belongs to the ATPase epsilon chain family. As to quaternary structure, F-type ATPases have 2 components, CF(1) - the catalytic core - and CF(0) - the membrane proton channel. CF(1) has five subunits: alpha(3), beta(3), gamma(1), delta(1), epsilon(1). CF(0) has three main subunits: a, b and c.

The protein resides in the cell inner membrane. Its function is as follows. Produces ATP from ADP in the presence of a proton gradient across the membrane. This Halorhodospira halophila (strain DSM 244 / SL1) (Ectothiorhodospira halophila (strain DSM 244 / SL1)) protein is ATP synthase epsilon chain.